The sequence spans 142 residues: Putative pre-16S rRNA nuclease (142 aa).

It belongs to the YqgF nuclease family.

The protein resides in the cytoplasm. Its function is as follows. Could be a nuclease involved in processing of the 5'-end of pre-16S rRNA. The sequence is that of Putative pre-16S rRNA nuclease from Saccharophagus degradans (strain 2-40 / ATCC 43961 / DSM 17024).